The following is a 143-amino-acid chain: Hemoglobin anodic subunit alpha (143 aa).

The residue at position 2 (S2) is an N-acetylserine. In terms of domain architecture, Globin spans 2–143; the sequence is SLSAKDMAVV…FTLALSERYR (142 aa). H60 is a binding site for O2. H89 contacts heme b.

It belongs to the globin family. In terms of assembly, heterotetramer of two alpha chains and two beta chains. Red blood cells.

Involved in oxygen transport from gills to the various peripheral tissues. The sequence is that of Hemoglobin anodic subunit alpha (hba) from Anguilla anguilla (European freshwater eel).